The sequence spans 500 residues: ATP synthase subunit beta (500 aa).

Position 155–162 (155–162 (GGAGVGKT)) interacts with ATP.

The protein belongs to the ATPase alpha/beta chains family. F-type ATPases have 2 components, CF(1) - the catalytic core - and CF(0) - the membrane proton channel. CF(1) has five subunits: alpha(3), beta(3), gamma(1), delta(1), epsilon(1). CF(0) has three main subunits: a(1), b(2) and c(9-12). The alpha and beta chains form an alternating ring which encloses part of the gamma chain. CF(1) is attached to CF(0) by a central stalk formed by the gamma and epsilon chains, while a peripheral stalk is formed by the delta and b chains.

It is found in the cell inner membrane. It catalyses the reaction ATP + H2O + 4 H(+)(in) = ADP + phosphate + 5 H(+)(out). Functionally, produces ATP from ADP in the presence of a proton gradient across the membrane. The catalytic sites are hosted primarily by the beta subunits. This chain is ATP synthase subunit beta, found in Azobacteroides pseudotrichonymphae genomovar. CFP2.